The chain runs to 492 residues: GTPase Der (492 aa).

2 consecutive EngA-type G domains span residues 3–167 (FTLA…DAYA) and 201–381 (LQVA…EVWN). Residues 9–16 (GRPNVGKS), 56–60 (DTAGL), 119–122 (NKAE), 207–214 (GRPNAGKS), 259–263 (DTAGM), and 324–327 (NKWD) contribute to the GTP site. The KH-like domain occupies 382–468 (RRVTTAQLNR…RLWMRGQNDA (87 aa)). Residues 462 to 492 (MRGQNDANPYKGRKKAPPSKLRKHTDGRRKD) form a disordered region. Residues 472 to 492 (KGRKKAPPSKLRKHTDGRRKD) show a composition bias toward basic residues.

It belongs to the TRAFAC class TrmE-Era-EngA-EngB-Septin-like GTPase superfamily. EngA (Der) GTPase family. As to quaternary structure, associates with the 50S ribosomal subunit.

Functionally, GTPase that plays an essential role in the late steps of ribosome biogenesis. The polypeptide is GTPase Der (Roseobacter denitrificans (strain ATCC 33942 / OCh 114) (Erythrobacter sp. (strain OCh 114))).